Here is a 264-residue protein sequence, read N- to C-terminus: Apolipoprotein A-I (264 aa).

Residues 1 to 18 (MKAVVLTVAVLFLTGSQA) form the signal peptide. 2 tandem repeats follow at residues 67–88 (LKLLDNWDSLSSTVSKVREQIG) and 89–110 (PVSQDFWDKLEKDTVSLRQEMN). The tract at residues 67 to 264 (LKLLDNWDSL…DEATKKLNTQ (198 aa)) is 10 X approximate tandem repeats. Residue methionine 109 is modified to Methionine sulfoxide. The 3; half-length repeat unit spans residues 111–121 (KDLEEVKRKVQ). 3 repeat units span residues 122 to 143 (PYLDEFQKRWQEDVERYRQQVE), 144 to 165 (PLSKELREGARQKLLELHEKLS), and 166 to 187 (PLGQEMRDRARTHVDALRTHLA). One copy of the 7; truncated repeat lies at 188-207 (PYSDELRQRLAARLEALKEG). The stretch at 208–229 (SSFAEYQAKATEHLSALGEKAK) is repeat 8. A 9; half-length repeat occupies 230–240 (PALEDLRQGLL). Copy 10 of the repeat occupies 241 to 264 (PVLESLKLSFWSAVDEATKKLNTQ).

The protein belongs to the apolipoprotein A1/A4/E family. As to quaternary structure, homodimer. Interacts with APOA1BP and CLU. Component of a sperm activating protein complex (SPAP), consisting of APOA1, an immunoglobulin heavy chain, an immunoglobulin light chain and albumin. Interacts with NDRG1. Interacts with SCGB3A2. Interacts with NAXE and YJEFN3. In terms of processing, glycosylated. Palmitoylated. Post-translationally, phosphorylation sites are present in the extracellular medium.

It is found in the secreted. In terms of biological role, participates in the reverse transport of cholesterol from tissues to the liver for excretion by promoting cholesterol efflux from tissues and by acting as a cofactor for the lecithin cholesterol acyltransferase (LCAT). As part of the SPAP complex, activates spermatozoa motility. This chain is Apolipoprotein A-I (APOA1), found in Ictidomys tridecemlineatus (Thirteen-lined ground squirrel).